The sequence spans 855 residues: MSFVRVNRCGPRVGVRKTPKVKKKKTSVKQEWDNTVTDLTVHRATPEDLVRRHEIHKSKNRALVHWELQEKALKRKWRKQKPETLNLEKRRLSIMKEILSDQYQMQDVLEKSDHLIAAAKELFPRRRTGFPNITVAPDSSQGPIVVNQDPITQSIFNESVIEPQALNDVDGEEEGTVTSQSGESENENELDNSLNSQSNTNTDRFLQQLTEENSELISKLWTDIQQKIVTQSQITPPGTPSSALSSGEQRAALNATNAVNRFQTRLQPEESTETLDSSYVVGHVLNSRKQKQLLNKVKRKPNLHALSKPKKNMLSGSTTSADLPNRTNSNLDVLKHMIHEVEHEMEEYERWTGREVKGLQSSQGLTGFTLSLVSSLCRLVRYLKESEIQLRKEVETRQQLEQVLGDHRELIDALTAEILRLREENAATQARLRQYMVTTDEQLISLTHAIKNCPVINNRQEIQASESGATGTRVMDSPEGPVVNANVSVPLMFREEVAEFPQEQLPVKLSQVPDPPDKMNLAKNFPAHIFEPAVLLTPPRQKSNLKFSPLQDVLRRTVQTRPAPRLLPTVEIIEKEQNWEEKTLPIDTDSQNSSEENRLFTQRWRVSHMGEDLENKTQAPFVNLSQPLCSSHSNTQQSRSPTFSEELPVLGDGQQLRTNESLIQRKDIMTRIADLTLQNSAIKAHMNNIIDPRGEQGDGLRELNKQESASDMTSTFPVAQSLTPGSMEERIAELNRQSMEARGKLLQLIEQQKLVGLNLSPPMSPVQLPLRAWTEGAKRTIEVSIPGAEAPESSKCSTVSPVSEINTRRSSGATSNSCSPLNATSGSGRFTPLNPRAKIEKQNEEGWFALSTHVS.

The segment at 164-200 (QALNDVDGEEEGTVTSQSGESENENELDNSLNSQSNT) is disordered. Threonine 235 carries the phosphothreonine modification. The span at 300–311 (KPNLHALSKPKK) shows a compositional bias: basic residues. Positions 300-328 (KPNLHALSKPKKNMLSGSTTSADLPNRTN) are disordered. The segment covering 314-328 (LSGSTTSADLPNRTN) has biased composition (polar residues). The stretch at 325–437 (NRTNSNLDVL…TQARLRQYMV (113 aa)) forms a coiled coil. 2 positions are modified to phosphoserine: serine 640 and serine 644. A coiled-coil region spans residues 725-751 (GSMEERIAELNRQSMEARGKLLQLIEQ). Residues serine 760, serine 764, and serine 819 each carry the phosphoserine modification. Residues 789-834 (EAPESSKCSTVSPVSEINTRRSSGATSNSCSPLNATSGSGRFTPLN) are disordered. The span at 794–828 (SKCSTVSPVSEINTRRSSGATSNSCSPLNATSGSG) shows a compositional bias: polar residues.

In terms of assembly, interacts with CEP120.

The protein resides in the cytoplasm. It is found in the cytoskeleton. It localises to the microtubule organizing center. Its subcellular location is the centrosome. The protein localises to the centriole. The protein resides in the spindle. Functionally, regulator required for centriole duplication, for proper bipolar spindle formation and chromosome congression in mitosis. This is Spindle and centriole-associated protein 1 (SPICE1) from Pongo abelii (Sumatran orangutan).